The sequence spans 448 residues: Putative F-box/LRR-repeat protein At5g25860 (448 aa).

In terms of domain architecture, F-box spans 11-58; that stretch reads RDAVNCLPDEILAKILSYLPTKRAVSTSLISKRWRNLFALMIQLFESQ. LRR repeat units follow at residues 82 to 106, 185 to 214, 215 to 240, 310 to 341, and 342 to 367; these read QESF…SILC, FLHA…FLHD, LRGY…TVHF, TLSL…YFES, and NEKE…VLKG.

In Arabidopsis thaliana (Mouse-ear cress), this protein is Putative F-box/LRR-repeat protein At5g25860.